A 289-amino-acid chain; its full sequence is MQGVYPAIVTPFKDGKVDYDGLRTNIDYLIENGVSGVIPVGTTGESPTLTPLEHEKVIEKVVEFVDGRVEVIAGTGSNSTSEALEFSQYAEDVGVDGVLLITPYYNKPSQEGLKRHFGEIANSINVPIVLYNVPSRTALNIEPETIKYLFEEYSNITAIKEANPNLSQVSEVLDSCNIDVLSGNDELTLPIISLGGKGVVSVVANIAPKEFVQMVDFANAGKFDKAKEIHYKLFPLMKLMFIETNPIPIKTAMNMLGMPSGELRLPLCEMAESNKLKLQNALNNLGLLK.

Residue Thr43 participates in pyruvate binding. The active-site Proton donor/acceptor is Tyr131. The active-site Schiff-base intermediate with substrate is the Lys160. A pyruvate-binding site is contributed by Val200.

Belongs to the DapA family. In terms of assembly, homotetramer; dimer of dimers.

It localises to the cytoplasm. It carries out the reaction L-aspartate 4-semialdehyde + pyruvate = (2S,4S)-4-hydroxy-2,3,4,5-tetrahydrodipicolinate + H2O + H(+). Its pathway is amino-acid biosynthesis; L-lysine biosynthesis via DAP pathway; (S)-tetrahydrodipicolinate from L-aspartate: step 3/4. Its function is as follows. Catalyzes the condensation of (S)-aspartate-beta-semialdehyde [(S)-ASA] and pyruvate to 4-hydroxy-tetrahydrodipicolinate (HTPA). This chain is 4-hydroxy-tetrahydrodipicolinate synthase, found in Methanococcus maripaludis (strain C6 / ATCC BAA-1332).